The sequence spans 476 residues: Serine/threonine-protein kinase chk-2 (476 aa).

Residues 66–127 (FVCGRGSDDA…NGTLVNQEMI (62 aa)) form the FHA domain. Positions 170–436 (HVTSHSLGKG…AVELMSTQWM (267 aa)) constitute a Protein kinase domain. Residues 177 to 184 (GKGGFGKV), Lys-199, and 252 to 258 (EYVGGGE) each bind ATP. The Proton acceptor role is filled by Asp-301. Residues 305 to 306 (EN) and Asp-322 contribute to the ATP site.

Belongs to the protein kinase superfamily. CAMK Ser/Thr protein kinase family. CHK2 subfamily. Mg(2+) is required as a cofactor. As to expression, highly expressed in germline tissue.

The protein localises to the nucleus. It carries out the reaction L-seryl-[protein] + ATP = O-phospho-L-seryl-[protein] + ADP + H(+). It catalyses the reaction L-threonyl-[protein] + ATP = O-phospho-L-threonyl-[protein] + ADP + H(+). Its function is as follows. Serine/threonine-protein kinase which is required for checkpoint-mediated cell cycle arrest, activation of DNA repair and apoptosis in response to the presence of DNA double-strand breaks. May also negatively regulate cell cycle progression during unperturbed cell cycles. Phosphorylates and inhibits cdc25 phosphatase, preventing entry into mitosis. Required for nuclear reorganization and homologous chromosome pairing during meiotic prophase. This Caenorhabditis elegans protein is Serine/threonine-protein kinase chk-2 (chk-2).